The sequence spans 365 residues: 2-aminoethylphosphonate--pyruvate transaminase (365 aa).

Lysine 194 bears the N6-(pyridoxal phosphate)lysine mark.

It belongs to the class-V pyridoxal-phosphate-dependent aminotransferase family. PhnW subfamily. As to quaternary structure, homodimer. It depends on pyridoxal 5'-phosphate as a cofactor.

It catalyses the reaction (2-aminoethyl)phosphonate + pyruvate = phosphonoacetaldehyde + L-alanine. Functionally, involved in phosphonate degradation. The polypeptide is 2-aminoethylphosphonate--pyruvate transaminase (Bacillus cereus (strain G9842)).